A 392-amino-acid chain; its full sequence is MGKTGIQLFDDSRNGFFSVSDLGFDSSLNSSNYHPIGGLFASVNQTNPFASLSSSDLSNRGNNSFSTQLNDLYTKYMPGKEEEEEVVNGEKRKRKKKGGLTLKIKIANPSLRRLLSGAVAGAVSRTVVAPLETIRTHLMVGSGGNSSTEVFSDIMKHEGWTGLFRGNLVNVIRVAPARAVELFVFETVNKKLSPPHGQESKIPIPASLLAGACAGVSQTLLTYPLELVKTRLTIQRGVYKGIFDAFLKIIREEGPTELYRGLAPSLIGVVPYAATNYFAYDSLRKAYRSFSKQEKIGNIETLLIGSLAGALSSTATFPLEVARKHMQVGAVSGRVVYKNMLHALVTILEHEGILGWYKGLGPSCLKLVPAAGISFMCYEACKKILIENNQEA.

Solcar repeat units follow at residues 108 to 191 (NPSL…VNKK), 202 to 286 (IPIP…LRKA), and 296 to 384 (IGNI…CKKI). The next 6 helical transmembrane spans lie at 113–133 (RLLS…PLET), 168–188 (LVNV…FETV), 204–224 (IPAS…LTYP), 263–283 (APSL…YDSL), 302–322 (LLIG…LEVA), and 359–379 (GLGP…MCYE).

It belongs to the mitochondrial carrier (TC 2.A.29) family. Expressed in root tips, the central cylinder of young roots, and maturating and germinating pollen.

It is found in the plastid. The protein localises to the chloroplast inner membrane. The protein resides in the mitochondrion inner membrane. With respect to regulation, inhibited by pyridoxal 5-phosphate but not mersalyl. In terms of biological role, probable mitochondrial adenylate carrier that catalyzes the transport of ATP, ADP and AMP, but not ADP-glucose. Recombinant BT1 shows a unidirectional mode of transport in intact E.coli cells. May function as a plastidial nucleotide uniport carrier required to export newly synthesized adenylates into the cytosol. May be involved in abiotic stress response. This chain is Adenine nucleotide transporter BT1, chloroplastic/mitochondrial (BT1), found in Arabidopsis thaliana (Mouse-ear cress).